We begin with the raw amino-acid sequence, 427 residues long: Enolase (427 aa).

Gln163 provides a ligand contact to (2R)-2-phosphoglycerate. The Proton donor role is filled by Glu205. Residues Asp242, Glu285, and Asp312 each contribute to the Mg(2+) site. The (2R)-2-phosphoglycerate site is built by Lys337, Arg366, Ser367, and Lys388. Lys337 acts as the Proton acceptor in catalysis.

The protein belongs to the enolase family. Requires Mg(2+) as cofactor.

It localises to the cytoplasm. It is found in the secreted. The protein resides in the cell surface. It carries out the reaction (2R)-2-phosphoglycerate = phosphoenolpyruvate + H2O. It participates in carbohydrate degradation; glycolysis; pyruvate from D-glyceraldehyde 3-phosphate: step 4/5. Its function is as follows. Catalyzes the reversible conversion of 2-phosphoglycerate (2-PG) into phosphoenolpyruvate (PEP). It is essential for the degradation of carbohydrates via glycolysis. The sequence is that of Enolase from Burkholderia orbicola (strain MC0-3).